Consider the following 689-residue polypeptide: Glycine--tRNA ligase beta subunit (689 aa).

It belongs to the class-II aminoacyl-tRNA synthetase family. In terms of assembly, tetramer of two alpha and two beta subunits.

It is found in the cytoplasm. The enzyme catalyses tRNA(Gly) + glycine + ATP = glycyl-tRNA(Gly) + AMP + diphosphate. The chain is Glycine--tRNA ligase beta subunit from Salmonella agona (strain SL483).